A 638-amino-acid chain; its full sequence is 3D-(3,5/4)-trihydroxycyclohexane-1,2-dione hydrolase (638 aa).

Glu-67 contacts thiamine diphosphate. Positions 442–523 (SLPGDLQRLW…INIMLFDNSG (82 aa)) are thiamine pyrophosphate binding. Mg(2+)-binding residues include Asp-494 and Asn-521.

This sequence belongs to the TPP enzyme family. Mg(2+) is required as a cofactor. It depends on thiamine diphosphate as a cofactor.

It catalyses the reaction 3D-3,5/4-trihydroxycyclohexane-1,2-dione + H2O = 5-deoxy-D-glucuronate + H(+). The protein operates within polyol metabolism; myo-inositol degradation into acetyl-CoA; acetyl-CoA from myo-inositol: step 3/7. Its function is as follows. Involved in the cleavage of the C1-C2 bond of 3D-(3,5/4)-trihydroxycyclohexane-1,2-dione (THcHDO) to yield 5-deoxy-glucuronate (5DG). The polypeptide is 3D-(3,5/4)-trihydroxycyclohexane-1,2-dione hydrolase (Listeria monocytogenes serovar 1/2a (strain ATCC BAA-679 / EGD-e)).